The primary structure comprises 164 residues: Phospholipase A and acyltransferase 4 (164 aa).

Positions 1–40 (MASPHQEPKPGDLIEIFRLGYEHWALYIGDGYVIHLAPPS) are essential for its ability regulate keratinocyte differentiation. Residues 1–134 (MASPHQEPKP…SRCKQVEKAK (134 aa)) lie on the Cytoplasmic side of the membrane. One can recognise an LRAT domain in the interval 13-129 (LIEIFRLGYE…LRYGKSRCKQ (117 aa)). Residues His23 and His35 contribute to the active site. The Acyl-thioester intermediate role is filled by Cys113. Positions 124–164 (KSRCKQVEKAKVEVGVATALGILVVAGCSFAIRRYQKKATA) are interaction with TGM1. A helical membrane pass occupies residues 135-155 (VEVGVATALGILVVAGCSFAI). At 156 to 164 (RRYQKKATA) the chain is on the lumenal side.

It belongs to the H-rev107 family. In terms of assembly, interacts with TGM1. In terms of tissue distribution, widely expressed.

The protein resides in the membrane. The catalysed reaction is a 1,2-diacyl-sn-glycero-3-phosphocholine + H2O = a 1-acyl-sn-glycero-3-phosphocholine + a fatty acid + H(+). It carries out the reaction a 1,2-diacyl-sn-glycero-3-phosphocholine + H2O = a 2-acyl-sn-glycero-3-phosphocholine + a fatty acid + H(+). It catalyses the reaction 1,2-dihexadecanoyl-sn-glycero-3-phosphocholine + H2O = 1-hexadecanoyl-sn-glycero-3-phosphocholine + hexadecanoate + H(+). The enzyme catalyses 1,2-dihexadecanoyl-sn-glycero-3-phosphocholine + H2O = 2-hexadecanoyl-sn-glycero-3-phosphocholine + hexadecanoate + H(+). The catalysed reaction is 1-hexadecanoyl-2-(9Z-octadecenoyl)-sn-glycero-3-phosphocholine + H2O = 2-(9Z-octadecenoyl)-sn-glycero-3-phosphocholine + hexadecanoate + H(+). It carries out the reaction 1-hexadecanoyl-2-(9Z-octadecenoyl)-sn-glycero-3-phosphocholine + H2O = 1-hexadecanoyl-sn-glycero-3-phosphocholine + (9Z)-octadecenoate + H(+). It catalyses the reaction 1-hexadecanoyl-2-(5Z,8Z,11Z,14Z-eicosatetraenoyl)-sn-glycero-3-phosphocholine + H2O = 2-(5Z,8Z,11Z,14Z)-eicosatetraenoyl-sn-glycero-3-phosphocholine + hexadecanoate + H(+). The enzyme catalyses 1-hexadecanoyl-2-(9Z,12Z-octadecadienoyl)-sn-glycero-3-phosphoethanolamine + H2O = 1-hexadecanoyl-sn-glycero-3-phosphoethanolamine + (9Z,12Z)-octadecadienoate + H(+). The catalysed reaction is 1-hexadecanoyl-2-(9Z,12Z-octadecadienoyl)-sn-glycero-3-phosphoethanolamine + H2O = 2-(9Z,12Z)-octadecadienoyl-sn-glycero-3-phosphoethanolamine + hexadecanoate + H(+). It carries out the reaction 1-hexadecanoyl-2-(5Z,8Z,11Z,14Z-eicosatetraenoyl)-sn-glycero-3-phosphoethanolamine + H2O = 2-(5Z,8Z,11Z,14Z)-eicosatetraenoyl-sn-glycero-3-phosphoethanolamine + hexadecanoate + H(+). It catalyses the reaction 1-hexanoyl-2-acyl-sn-glycero-3-phosphocholine + H2O = hexanoate + a 2-acyl-sn-glycero-3-phosphocholine + H(+). The enzyme catalyses 1,2-diheptadecanoyl-sn-glycero-3-phosphoethanolamine + 1-(9Z-octadecenoyl)-2-hexadecanoyl-sn-glycero-3-phosphocholine = 1,2-diheptadecanoyl-sn-glycero-3-phospho-N-hexadecanoyl-ethanolamine + 1-(9Z-octadecenoyl)-sn-glycero-3-phosphocholine + H(+). The catalysed reaction is 1,2-diheptadecanoyl-sn-glycero-3-phosphoethanolamine + 1-(9Z-octadecenoyl)-2-hexadecanoyl-sn-glycero-3-phosphocholine = 1,2-diheptadecanoyl-sn-glycero-3-phospho-N-(9Z-octadecenoyl)-ethanolamine + 2-hexadecanoyl-sn-glycero-3-phosphocholine + H(+). In terms of biological role, exhibits both phospholipase A1/2 and acyltransferase activities. Shows phospholipase A1 (PLA1) and A2 (PLA2), catalyzing the calcium-independent release of fatty acids from the sn-1 or sn-2 position of glycerophospholipids. For most substrates, PLA1 activity is much higher than PLA2 activity. Shows O-acyltransferase activity, catalyzing the transfer of a fatty acyl group from glycerophospholipid to the hydroxyl group of lysophospholipid. Shows N-acyltransferase activity, catalyzing the calcium-independent transfer of a fatty acyl group at the sn-1 position of phosphatidylcholine (PC) and other glycerophospholipids to the primary amine of phosphatidylethanolamine (PE), forming N-acylphosphatidylethanolamine (NAPE), which serves as precursor for N-acylethanolamines (NAEs). Promotes keratinocyte differentiation via activation of TGM1. The sequence is that of Phospholipase A and acyltransferase 4 from Homo sapiens (Human).